Consider the following 1324-residue polypeptide: Coiled-coil domain-containing protein 171 (1324 aa).

Coiled coils occupy residues Lys-29–His-296, Ala-325–Tyr-393, Phe-453–Asp-521, Ser-599–Asn-712, and Phe-981–Val-1145. The segment covering Pro-1301 to Val-1312 has biased composition (polar residues). Positions Pro-1301–Leu-1324 are disordered.

This is Coiled-coil domain-containing protein 171 (Ccdc171) from Mus musculus (Mouse).